Here is a 250-residue protein sequence, read N- to C-terminus: Probable cytokinin riboside 5'-monophosphate phosphoribohydrolase LOGL6 (250 aa).

Substrate-binding positions include Glu-98, 116 to 117 (RK), and 133 to 139 (GYGTLEE).

It belongs to the LOG family. Expressed in roots, leaves, stems, tiller buds, shoot apex, immature inflorescences and flowers.

The enzyme catalyses N(6)-(dimethylallyl)adenosine 5'-phosphate + H2O = N(6)-dimethylallyladenine + D-ribose 5-phosphate. The catalysed reaction is 9-ribosyl-trans-zeatin 5'-phosphate + H2O = trans-zeatin + D-ribose 5-phosphate. In terms of biological role, cytokinin-activating enzyme working in the direct activation pathway. Phosphoribohydrolase that converts inactive cytokinin nucleotides to the biologically active free-base forms. This is Probable cytokinin riboside 5'-monophosphate phosphoribohydrolase LOGL6 (LOGL6) from Oryza sativa subsp. japonica (Rice).